The chain runs to 500 residues: Probable cytosol aminopeptidase (500 aa).

Lysine 265 and aspartate 270 together coordinate Mn(2+). Residue lysine 277 is part of the active site. Mn(2+) is bound by residues aspartate 288, aspartate 347, and glutamate 349. Arginine 351 is a catalytic residue.

Belongs to the peptidase M17 family. Mn(2+) is required as a cofactor.

It is found in the cytoplasm. The catalysed reaction is Release of an N-terminal amino acid, Xaa-|-Yaa-, in which Xaa is preferably Leu, but may be other amino acids including Pro although not Arg or Lys, and Yaa may be Pro. Amino acid amides and methyl esters are also readily hydrolyzed, but rates on arylamides are exceedingly low.. It carries out the reaction Release of an N-terminal amino acid, preferentially leucine, but not glutamic or aspartic acids.. Functionally, presumably involved in the processing and regular turnover of intracellular proteins. Catalyzes the removal of unsubstituted N-terminal amino acids from various peptides. This Rickettsia rickettsii (strain Iowa) protein is Probable cytosol aminopeptidase.